The following is an 80-amino-acid chain: Conotoxin Pu11.1 (80 aa).

The N-terminal stretch at 1 to 19 is a signal peptide; that stretch reads MKLVLAIVLILMLLSLSTG. The propeptide occupies 20–42; that stretch reads AEMSDNHASRSATALTDRLLGPK. Intrachain disulfides connect cysteine 46–cysteine 60, cysteine 53–cysteine 65, cysteine 59–cysteine 72, and cysteine 64–cysteine 79.

The protein belongs to the conotoxin I3 superfamily. Expressed by the venom duct.

It is found in the secreted. This Conus pulicarius (Flea-bitten cone) protein is Conotoxin Pu11.1.